The chain runs to 179 residues: MIDDNIENNEQTINDIAEDIVETANPEITELKAEIEELKDKLIRTTAEIDNTRKRLEKARDEAKDYAIATFAKELLNVSDNLSRALAHKPANSDIEVTNIIAGVQMTKDELDKIFHKHHIEEIKPEIGSMFDYNLHNAISQIEHPDHAPNSIITLMQSGYKIRDRLLRPATVQVVKKSE.

This sequence belongs to the GrpE family. Homodimer.

It localises to the cytoplasm. In terms of biological role, participates actively in the response to hyperosmotic and heat shock by preventing the aggregation of stress-denatured proteins, in association with DnaK and GrpE. It is the nucleotide exchange factor for DnaK and may function as a thermosensor. Unfolded proteins bind initially to DnaJ; upon interaction with the DnaJ-bound protein, DnaK hydrolyzes its bound ATP, resulting in the formation of a stable complex. GrpE releases ADP from DnaK; ATP binding to DnaK triggers the release of the substrate protein, thus completing the reaction cycle. Several rounds of ATP-dependent interactions between DnaJ, DnaK and GrpE are required for fully efficient folding. This Rickettsia felis (strain ATCC VR-1525 / URRWXCal2) (Rickettsia azadi) protein is Protein GrpE.